The primary structure comprises 386 residues: S-adenosylmethionine synthase (386 aa).

His16 provides a ligand contact to ATP. Asp18 contributes to the Mg(2+) binding site. Glu44 provides a ligand contact to K(+). The L-methionine site is built by Glu57 and Gln100. Residues Gln100–Arg110 form a flexible loop region. ATP-binding positions include Asp164–Lys166, Lys230–Phe231, Asp239, Arg245–Lys246, Ala262, and Lys266. Residue Asp239 participates in L-methionine binding. An L-methionine-binding site is contributed by Lys270.

The protein belongs to the AdoMet synthase family. As to quaternary structure, homotetramer; dimer of dimers. Mg(2+) serves as cofactor. It depends on K(+) as a cofactor.

It is found in the cytoplasm. The enzyme catalyses L-methionine + ATP + H2O = S-adenosyl-L-methionine + phosphate + diphosphate. It participates in amino-acid biosynthesis; S-adenosyl-L-methionine biosynthesis; S-adenosyl-L-methionine from L-methionine: step 1/1. Its function is as follows. Catalyzes the formation of S-adenosylmethionine (AdoMet) from methionine and ATP. The overall synthetic reaction is composed of two sequential steps, AdoMet formation and the subsequent tripolyphosphate hydrolysis which occurs prior to release of AdoMet from the enzyme. In Helicobacter hepaticus (strain ATCC 51449 / 3B1), this protein is S-adenosylmethionine synthase.